Here is a 1030-residue protein sequence, read N- to C-terminus: Peroxisomal ATPase PEX6 (1030 aa).

The interval 478–683 (VLLHSTTNNV…VETARMTATA (206 aa)) is AAA-cassette D1. The segment at 767-956 (GILFYGPPGT…CSDAMLNAMS (190 aa)) is AAA-cassette D2. An ATP-binding site is contributed by 772-779 (GPPGTGKT).

Belongs to the AAA ATPase family. In terms of assembly, interacts with PEX1; forming the PEX1-PEX6 AAA ATPase complex, which is composed of a heterohexamer formed by a trimer of PEX1-PEX6 dimers. Interacts with PEX15; anchors PEX1-PEX6 heterooligomers to the peroxisomal membrane and mediates their association with the peroxisomal importomer. Interacts with UBP15.

The protein resides in the cytoplasm. The protein localises to the cytosol. It localises to the peroxisome membrane. The enzyme catalyses ATP + H2O = ADP + phosphate + H(+). Functionally, component of the PEX1-PEX6 AAA ATPase complex, a protein dislocase complex that mediates the ATP-dependent extraction of the PEX5 receptor from peroxisomal membranes, an essential step for PEX5 recycling. Specifically recognizes PEX5 monoubiquitinated at 'Cys-6', and pulls it out of the peroxisome lumen through the PEX2-PEX10-PEX12 retrotranslocation channel. Extraction by the PEX1-PEX6 AAA ATPase complex is accompanied by unfolding of the TPR repeats and release of bound cargo from PEX5. This chain is Peroxisomal ATPase PEX6, found in Saccharomyces cerevisiae (strain ATCC 204508 / S288c) (Baker's yeast).